The sequence spans 292 residues: Probable endonuclease 4 (292 aa).

The Zn(2+) site is built by His69, His109, Glu145, Asp179, His182, His216, Asp229, His231, and Glu261.

Belongs to the AP endonuclease 2 family. It depends on Zn(2+) as a cofactor.

It catalyses the reaction Endonucleolytic cleavage to 5'-phosphooligonucleotide end-products.. Endonuclease IV plays a role in DNA repair. It cleaves phosphodiester bonds at apurinic or apyrimidinic (AP) sites, generating a 3'-hydroxyl group and a 5'-terminal sugar phosphate. The protein is Probable endonuclease 4 of Desulfotalea psychrophila (strain LSv54 / DSM 12343).